We begin with the raw amino-acid sequence, 98 residues long: MVSSAGLSLTLVAALCALVAPALSSIVSTEGPLPLLREESRINFWNAACAARGVPVDQPTAAAVTFYICLLAVLVVALGYATRTCTRMLHASPAGRRV.

The signal sequence occupies residues 1–24 (MVSSAGLSLTLVAALCALVAPALS). At 25–60 (SIVSTEGPLPLLREESRINFWNAACAARGVPVDQPT) the chain is on the virion surface side. The helical transmembrane segment at 61–81 (AAAVTFYICLLAVLVVALGYA) threads the bilayer. Residues 82-98 (TRTCTRMLHASPAGRRV) lie on the Intravirion side of the membrane.

It belongs to the herpesviridae glycoprotein N family. In terms of assembly, interacts (via N-terminus) with gM (via N-terminus). The gM-gN heterodimer forms the gCII complex. In terms of processing, O-glycosylated.

The protein resides in the virion membrane. The protein localises to the host membrane. Its subcellular location is the host Golgi apparatus. It localises to the host trans-Golgi network. Functionally, envelope glycoprotein necessary for proper maturation of gM and modulation of its membrane fusion activity. Also plays a critical role in virion morphogenesis. The protein is Envelope glycoprotein N of Suid herpesvirus 1 (SuHV-1).